Consider the following 361-residue polypeptide: Myb/SANT-like DNA-binding domain-containing protein 7 (361 aa).

One can recognise a Myb-like domain in the interval 11 to 70 (RWSRQETRTLLSILGEAEYIQRLQTVHHNADVYQAVSKRMQQEGFRRTERQCRSKFKVLK). 2 disordered regions span residues 174 to 198 (TSDL…SYSS) and 217 to 272 (RLGV…ARRR). Polar residues-rich tracts occupy residues 187-198 (AGCSQGTPSYSS) and 226-249 (PCTS…SSSR).

The chain is Myb/SANT-like DNA-binding domain-containing protein 7 from Homo sapiens (Human).